The sequence spans 103 residues: Large ribosomal subunit protein bL21 (103 aa).

It belongs to the bacterial ribosomal protein bL21 family. As to quaternary structure, part of the 50S ribosomal subunit. Contacts protein L20.

Functionally, this protein binds to 23S rRNA in the presence of protein L20. The protein is Large ribosomal subunit protein bL21 of Hahella chejuensis (strain KCTC 2396).